Here is a 319-residue protein sequence, read N- to C-terminus: ATP-dependent 6-phosphofructokinase (319 aa).

An ATP-binding site is contributed by Gly-11. 21 to 25 (RAVVR) is an ADP binding site. Residues 72-73 (RC) and 102-105 (GDGS) each bind ATP. A Mg(2+)-binding site is contributed by Asp-103. 125–127 (TID) lines the substrate pocket. Asp-127 serves as the catalytic Proton acceptor. Arg-154 contacts ADP. Substrate contacts are provided by residues Arg-162 and 169–171 (MGR). ADP contacts are provided by residues 185 to 187 (GAE), Arg-211, and 213 to 215 (KKH). Residues Glu-222, Arg-243, and 249-252 (HVQR) each bind substrate.

Belongs to the phosphofructokinase type A (PFKA) family. ATP-dependent PFK group I subfamily. Prokaryotic clade 'B1' sub-subfamily. As to quaternary structure, homotetramer. Mg(2+) serves as cofactor.

It localises to the cytoplasm. The enzyme catalyses beta-D-fructose 6-phosphate + ATP = beta-D-fructose 1,6-bisphosphate + ADP + H(+). It participates in carbohydrate degradation; glycolysis; D-glyceraldehyde 3-phosphate and glycerone phosphate from D-glucose: step 3/4. Its activity is regulated as follows. Allosterically activated by ADP and other diphosphonucleosides, and allosterically inhibited by phosphoenolpyruvate. Its function is as follows. Catalyzes the phosphorylation of D-fructose 6-phosphate to fructose 1,6-bisphosphate by ATP, the first committing step of glycolysis. The sequence is that of ATP-dependent 6-phosphofructokinase from Geobacillus kaustophilus (strain HTA426).